The sequence spans 224 residues: Proteasome subunit beta (224 aa).

Residues 1 to 6 (MDVMKG) constitute a propeptide, removed in mature form; by autocatalysis. The Nucleophile role is filled by Thr-7.

The protein belongs to the peptidase T1B family. The 20S proteasome core is composed of 14 alpha and 14 beta subunits that assemble into four stacked heptameric rings, resulting in a barrel-shaped structure. The two inner rings, each composed of seven catalytic beta subunits, are sandwiched by two outer rings, each composed of seven alpha subunits. The catalytic chamber with the active sites is on the inside of the barrel. Has a gated structure, the ends of the cylinder being occluded by the N-termini of the alpha-subunits. Is capped at one or both ends by the proteasome regulatory ATPase, PAN.

The protein resides in the cytoplasm. The enzyme catalyses Cleavage of peptide bonds with very broad specificity.. With respect to regulation, the formation of the proteasomal ATPase PAN-20S proteasome complex, via the docking of the C-termini of PAN into the intersubunit pockets in the alpha-rings, triggers opening of the gate for substrate entry. Interconversion between the open-gate and close-gate conformations leads to a dynamic regulation of the 20S proteasome proteolysis activity. Its function is as follows. Component of the proteasome core, a large protease complex with broad specificity involved in protein degradation. The M.jannaschii proteasome is able to cleave oligopeptides after Glu, Asp, Tyr, Phe, Trp, slightly after Arg, but not after Ala. Thus, displays caspase-like and chymotrypsin-like activities and low level of trypsin-like activity. The sequence is that of Proteasome subunit beta from Methanocaldococcus jannaschii (strain ATCC 43067 / DSM 2661 / JAL-1 / JCM 10045 / NBRC 100440) (Methanococcus jannaschii).